We begin with the raw amino-acid sequence, 396 residues long: Vitamin K-dependent protein Z (396 aa).

One can recognise a Gla domain in the interval 1–46; that stretch reads AGSYLLEELFEGHLEKECWEEICVYEEAREVFEDDETTDEFWRTYM. 4-carboxyglutamate is present on residues Glu-7, Glu-8, Glu-11, Glu-15, Glu-17, Glu-20, Glu-21, Glu-26, Glu-27, Glu-30, Glu-33, Glu-36, and Glu-40. A disulfide bond links Cys-18 and Cys-23. EGF-like domains lie at 47-83 and 85-126; these read GGSP…PNCA and AESE…RSCL. 7 cysteine pairs are disulfide-bonded: Cys-51-Cys-62, Cys-56-Cys-71, Cys-73-Cys-82, Cys-89-Cys-101, Cys-97-Cys-110, Cys-112-Cys-125, and Cys-169-Cys-185. O-linked (Glc...) serine glycosylation occurs at Ser-53. Residue Asn-59 is glycosylated (N-linked (GlcNAc...) asparagine). Asp-64 is subject to (3R)-3-hydroxyaspartate. The Peptidase S1 domain maps to 135–357; sequence TLGPECCQRP…YALWLRQVTQ (223 aa). N-linked (GlcNAc...) asparagine glycosylation is found at Asn-191 and Asn-289. Cysteines 284 and 298 form a disulfide. Residues 356 to 396 are disordered; it reads TQQPSRASPRGDRGQGRDGEPVPGDRGGRWAPTALPPGPLV. The span at 364–375 shows a compositional bias: basic and acidic residues; sequence PRGDRGQGRDGE. The O-linked (GalNAc...) threonine glycan is linked to Thr-388.

Belongs to the peptidase S1 family. The iron and 2-oxoglutarate dependent 3-hydroxylation of aspartate and asparagine is (R) stereospecific within EGF domains. In terms of tissue distribution, plasma.

It localises to the secreted. Inhibits activity of the coagulation protease factor Xa in the presence of SERPINA10, calcium and phospholipids. Appears to assist hemostasis by binding thrombin and promoting its association with phospholipid vesicles. This is Vitamin K-dependent protein Z (PROZ) from Bos taurus (Bovine).